We begin with the raw amino-acid sequence, 266 residues long: Diphthine synthase (266 aa).

S-adenosyl-L-methionine contacts are provided by residues L9, D84, V87, 112–113, L169, A210, and H235; that span reads SI.

It belongs to the diphthine synthase family. Homodimer.

The catalysed reaction is 2-[(3S)-amino-3-carboxypropyl]-L-histidyl-[translation elongation factor 2] + 3 S-adenosyl-L-methionine = diphthine-[translation elongation factor 2] + 3 S-adenosyl-L-homocysteine + 3 H(+). It functions in the pathway protein modification; peptidyl-diphthamide biosynthesis. S-adenosyl-L-methionine-dependent methyltransferase that catalyzes the trimethylation of the amino group of the modified target histidine residue in translation elongation factor 2 (EF-2), to form an intermediate called diphthine. The three successive methylation reactions represent the second step of diphthamide biosynthesis. The sequence is that of Diphthine synthase from Methanosarcina mazei (strain ATCC BAA-159 / DSM 3647 / Goe1 / Go1 / JCM 11833 / OCM 88) (Methanosarcina frisia).